A 353-amino-acid chain; its full sequence is Chemerin-like receptor 2 (353 aa).

Residues 1–41 are Extracellular-facing; the sequence is MEVSKEMLFEELDNYSYALDYYSQESDPEEKVYLGLVHWIS. N-linked (GlcNAc...) asparagine glycosylation occurs at N14. Residues 42–62 traverse the membrane as a helical segment; the sequence is LFLYALAFVLGIPGNAIVIWL. At 63–73 the chain is on the cytoplasmic side; the sequence is MGFKWKKTVTT. The helical transmembrane segment at 74–94 threads the bilayer; that stretch reads LWFLNLAIADFIFVLFLPLYI. Residues 95–112 are Extracellular-facing; that stretch reads SYVALSFHWPFGLWLCKV. A disulfide bridge connects residues C110 and C187. A helical transmembrane segment spans residues 113–133; that stretch reads NSFIAQLNMFSSVFFLTVISL. The Cytoplasmic segment spans residues 134-154; the sequence is DRYIHLLHPGLSHRHRTLKSS. Residues 155–175 traverse the membrane as a helical segment; the sequence is LVVVILVWLLASLLGGPTLYF. Over 176 to 210 the chain is Extracellular; the sequence is RDTMEVNNHIICYNNFQEHELTLMRHHVLTWVKFL. A helical membrane pass occupies residues 211 to 231; it reads FGYLFPLLTMSSCYLCLIFKM. The Cytoplasmic portion of the chain corresponds to 232–247; that stretch reads KKRNILISRKHLWMIL. A helical membrane pass occupies residues 248–268; it reads SVVIAFLVCWTPYHLFSIWEL. The Extracellular segment spans residues 269–286; sequence SIHHNSSFQNVLQGGIPL. Residues 287 to 307 traverse the membrane as a helical segment; that stretch reads STGLAFLNSCLNPILYVLISK. Residues 308 to 353 are Cytoplasmic-facing; sequence TFQARFRASVAEVLKRSLWEASCSGTVSEQLRSAETKSLSLLETAQ.

It belongs to the chemokine-like receptor (CMKLR) family. As to expression, high expressed in white adipose tissue and skeletal muscle. Expressed in hippocampus and cortex.

Its subcellular location is the cell membrane. Functionally, receptor for chemoattractant adipokine chemerin/RARRES2 suggesting a role for this receptor in the regulation of inflammation and energy homesotasis. Signals mainly via beta-arrestin pathway. Binding of RARRES2 activates weakly G proteins, calcium mobilization and MAPK1/MAPK3 (ERK1/2) phosphorylation too. Acts also as a receptor for TAFA1, mediates its effects on neuronal stem-cell proliferation and differentiation via the activation of ROCK/ERK and ROCK/STAT3 signaling pathway. This is Chemerin-like receptor 2 (Cmklr2) from Mus musculus (Mouse).